Consider the following 848-residue polypeptide: Trimethylamine-N-oxide reductase 1 (848 aa).

Residues 1-39 (MNNNDLFQASRRRFLAQLGGLTVAGMLGTSLLTPRRATA) constitute a signal peptide (tat-type signal). Ser-191 is a Mo-bis(molybdopterin guanine dinucleotide) binding site.

This sequence belongs to the prokaryotic molybdopterin-containing oxidoreductase family. It depends on Mo-bis(molybdopterin guanine dinucleotide) as a cofactor. In terms of processing, predicted to be exported by the Tat system. The position of the signal peptide cleavage has not been experimentally proven.

The protein localises to the periplasm. It carries out the reaction trimethylamine + 2 Fe(III)-[cytochrome c] + H2O = trimethylamine N-oxide + 2 Fe(II)-[cytochrome c] + 3 H(+). Its function is as follows. Reduces trimethylamine-N-oxide (TMAO) into trimethylamine; an anaerobic reaction coupled to energy-yielding reactions. In Escherichia coli O6:H1 (strain CFT073 / ATCC 700928 / UPEC), this protein is Trimethylamine-N-oxide reductase 1 (torA).